Here is a 69-residue protein sequence, read N- to C-terminus: Large ribosomal subunit protein bL28 (69 aa).

Belongs to the bacterial ribosomal protein bL28 family.

The polypeptide is Large ribosomal subunit protein bL28 (Desulfovibrio desulfuricans (strain ATCC 27774 / DSM 6949 / MB)).